Reading from the N-terminus, the 212-residue chain is Interleukin-6 (212 aa).

Positions 1 to 29 (MNSFSTSAFGPVAFSLGLLLVLPAAFPAP) are cleaved as a signal peptide. Cystine bridges form between cysteine 72–cysteine 78 and cysteine 101–cysteine 111. An N-linked (GlcNAc...) asparagine glycan is attached at asparagine 73. Residue asparagine 172 is glycosylated (N-linked (GlcNAc...) asparagine).

It belongs to the IL-6 superfamily. In terms of assembly, component of a hexamer of two molecules each of IL6, IL6R and IL6ST; first binds to IL6R to associate with the signaling subunit IL6ST. Interacts with IL6R (via the N-terminal ectodomain); this interaction may be affected by IL6R-binding with SORL1, hence decreasing IL6 cis signaling. Interacts with SORL1 (via the N-terminal ectodomain); this interaction leads to IL6 internalization and lysosomal degradation. May form a trimeric complex with the soluble SORL1 ectodomain and soluble IL6R receptor; this interaction might stabilize circulating IL6, hence promoting IL6 trans signaling.

The protein localises to the secreted. Its function is as follows. Cytokine with a wide variety of biological functions in immunity, tissue regeneration, and metabolism. Binds to IL6R, then the complex associates to the signaling subunit IL6ST/gp130 to trigger the intracellular IL6-signaling pathway. The interaction with the membrane-bound IL6R and IL6ST stimulates 'classic signaling', whereas the binding of IL6 and soluble IL6R to IL6ST stimulates 'trans-signaling'. Alternatively, 'cluster signaling' occurs when membrane-bound IL6:IL6R complexes on transmitter cells activate IL6ST receptors on neighboring receiver cells. In terms of biological role, IL6 is a potent inducer of the acute phase response. Rapid production of IL6 contributes to host defense during infection and tissue injury, but excessive IL6 synthesis is involved in disease pathology. In the innate immune response, is synthesized by myeloid cells, such as macrophages and dendritic cells, upon recognition of pathogens through toll-like receptors (TLRs) at the site of infection or tissue injury. In the adaptive immune response, is required for the differentiation of B cells into immunoglobulin-secreting cells. Plays a major role in the differentiation of CD4(+) T cell subsets. Essential factor for the development of T follicular helper (Tfh) cells that are required for the induction of germinal-center formation. Required to drive naive CD4(+) T cells to the Th17 lineage. Also required for proliferation of myeloma cells and the survival of plasmablast cells. Acts as an essential factor in bone homeostasis and on vessels directly or indirectly by induction of VEGF, resulting in increased angiogenesis activity and vascular permeability. Induces, through 'trans-signaling' and synergistically with IL1B and TNF, the production of VEGF. Involved in metabolic controls, is discharged into the bloodstream after muscle contraction increasing lipolysis and improving insulin resistance. 'Trans-signaling' in central nervous system also regulates energy and glucose homeostasis. Mediates, through GLP-1, crosstalk between insulin-sensitive tissues, intestinal L cells and pancreatic islets to adapt to changes in insulin demand. Also acts as a myokine. Plays a protective role during liver injury, being required for maintenance of tissue regeneration. Also has a pivotal role in iron metabolism by regulating HAMP/hepcidin expression upon inflammation or bacterial infection. Through activation of IL6ST-YAP-NOTCH pathway, induces inflammation-induced epithelial regeneration. This chain is Interleukin-6 (IL6), found in Cercocebus atys (Sooty mangabey).